The sequence spans 123 residues: Small ribosomal subunit protein uS13 (123 aa).

Residues 99–113 (RGQRTHTNARTRKGG) are compositionally biased toward basic residues. Residues 99-123 (RGQRTHTNARTRKGGSRLAVAAKKK) form a disordered region.

The protein belongs to the universal ribosomal protein uS13 family. As to quaternary structure, part of the 30S ribosomal subunit. Forms a loose heterodimer with protein S19. Forms two bridges to the 50S subunit in the 70S ribosome.

Functionally, located at the top of the head of the 30S subunit, it contacts several helices of the 16S rRNA. In the 70S ribosome it contacts the 23S rRNA (bridge B1a) and protein L5 of the 50S subunit (bridge B1b), connecting the 2 subunits; these bridges are implicated in subunit movement. Contacts the tRNAs in the A and P-sites. The sequence is that of Small ribosomal subunit protein uS13 from Anaplasma phagocytophilum (strain HZ).